Consider the following 564-residue polypeptide: MVYSSTSSSQNRPDGEKHVEAVGSSTRIPSDELVDRGGGDTTTGKQSPRDIHGWKWATAYSAMLSTTLLFALDNTIVANIQPAIINDFGHLELLSWIGTGFALGTMFILLWGKVYGVFNIKWVYIFNIFLFEAGSALCGAAPNMAALIIGRVIAGVGGSGMYSGTLTYVSVLSNDQEKPAYLAGSTVVWGIGSVLGPVVGGAFAASSATWRWGFYVNLPIGAAFAPVYFLLFPSFDPYPSKTLAEKLRLVDWINAVIFLAGSACLTVVLTFGGVVYPFNSGTVIALWTVTGILLVAFIVLLKLHPLVAKENRLYPLHFFKQPTLINMQLQVFLSSGIILAMTYYVPLYFQFIKGDGALEAGVRLLPLIMFMVVASMVNGFLMPRYGLIPIWYIGGSSLALIGTALMYTVDDSTSNANIYGYNILIGAGTGSYIVAGFAIVQSLVPVHEIANAVGAMTIFQDLGMVLFLAISGSLFHNVAVDKVGKALPDVSHTEIANLIAGSSSKAFQALSDTEKALVIPEIASAMTTIWAFFLAAAALSVVCSFPLLKAKIGGMEKRTAITAA.

Residues 1–12 (MVYSSTSSSQNR) are compositionally biased toward polar residues. Residues 1–48 (MVYSSTSSSQNRPDGEKHVEAVGSSTRIPSDELVDRGGGDTTTGKQSP) form a disordered region. The span at 29-38 (PSDELVDRGG) shows a compositional bias: basic and acidic residues. The next 14 helical transmembrane spans lie at 65 to 85 (STTL…PAII), 91 to 111 (LELL…ILLW), 122 to 142 (WVYI…GAAP), 152 to 172 (VIAG…VSVL), 185 to 205 (STVV…AFAA), 212 to 232 (WGFY…FLLF), 255 to 275 (AVIF…GGVV), 281 to 301 (GTVI…IVLL), 332 to 352 (FLSS…FQFI), 362 to 382 (VRLL…GFLM), 386 to 406 (GLIP…TALM), 423 to 443 (ILIG…VQSL), 452 to 472 (AVGA…AISG), and 528 to 548 (TIWA…FPLL).

It belongs to the major facilitator superfamily. TCR/Tet family.

It is found in the cell membrane. Functionally, efflux pump; part of the gene cluster that mediates the biosynthesis of depudecin, a highly oxidized eleven-carbon linear polyketide that acts as a histone deacetylase (HDAC) inhibitor and makes a small contribution to pathogenesis. Is presumed either to be responsible for exporting depudecin, to provide self-protection, or both. This is Efflux pump DEP3 from Alternaria brassicicola (Dark leaf spot agent).